The following is a 507-amino-acid chain: Ribonuclease Y (507 aa).

Residues 1 to 21 form a helical membrane-spanning segment; sequence MLWYIVAGAGGLLIGYLIASY. The 86-residue stretch at 197 to 282 folds into the KH domain; the sequence is TVSTVSLPSD…EMYEKAKQEV (86 aa). In terms of domain architecture, HD spans 323–416; it reads VLNHSIEVAL…VAAADALSAA (94 aa).

Belongs to the RNase Y family.

The protein localises to the cell membrane. Endoribonuclease that initiates mRNA decay. The chain is Ribonuclease Y from Thermotoga petrophila (strain ATCC BAA-488 / DSM 13995 / JCM 10881 / RKU-1).